We begin with the raw amino-acid sequence, 232 residues long: Large ribosomal subunit protein uL1 (232 aa).

Belongs to the universal ribosomal protein uL1 family. In terms of assembly, part of the 50S ribosomal subunit.

In terms of biological role, binds directly to 23S rRNA. The L1 stalk is quite mobile in the ribosome, and is involved in E site tRNA release. Its function is as follows. Protein L1 is also a translational repressor protein, it controls the translation of the L11 operon by binding to its mRNA. The polypeptide is Large ribosomal subunit protein uL1 (Liberibacter asiaticus (Citrus greening disease)).